Reading from the N-terminus, the 293-residue chain is MALTPTNLNNEMSLPMKMDCQEQELTEKNNSFFQKLNVTKSVMQDLLKEIIKVDYILDRSDDEDDISSENPQTDFLHKGMLELEAKHDQDLGKQDEQETDVDEYPQASTSLQFSKKNLLEFLLKDMLTLKGQIDKLEDRGLDLDQGTNTEVNARNEVYELKKKVMESLEDLCKNVELLSAKLRMYQMEGENTDSHSSEETDMEEMETLLPQAPASFLVQNSPPPNTVWKCALRIFIMFYVLTVTGLLCYILFFGATFLFERVLLRMLGCRTTWDLREMIEPFLNSEVEALLPS.

Positions 116–188 form a coiled coil; it reads KNLLEFLLKD…SAKLRMYQME (73 aa). A helical transmembrane segment spans residues 234–254; that stretch reads IFIMFYVLTVTGLLCYILFFG.

It localises to the membrane. The chain is Single-pass membrane and coiled-coil domain-containing protein 2 (SMCO2) from Macaca fascicularis (Crab-eating macaque).